An 87-amino-acid chain; its full sequence is Acylphosphatase (87 aa).

An Acylphosphatase-like domain is found at 2-87 (RLTALVSGTV…ATGLRDFHVY (86 aa)). Catalysis depends on residues R17 and N35.

Belongs to the acylphosphatase family.

The enzyme catalyses an acyl phosphate + H2O = a carboxylate + phosphate + H(+). The chain is Acylphosphatase (acyP) from Deinococcus geothermalis (strain DSM 11300 / CIP 105573 / AG-3a).